We begin with the raw amino-acid sequence, 636 residues long: Methionine--tRNA ligase (636 aa).

The short motif at Tyr12–Ser22 is the 'HIGH' region element. Residues Cys127, Cys130, Cys145, and Cys148 each coordinate Zn(2+). The 'KMSKS' region signature appears at Lys298–Ser302. Lys301 is a binding site for ATP. A tRNA-binding domain is found at Glu535–Ser636.

The protein belongs to the class-I aminoacyl-tRNA synthetase family. MetG type 2A subfamily. Homodimer. The cofactor is Zn(2+).

Its subcellular location is the cytoplasm. It carries out the reaction tRNA(Met) + L-methionine + ATP = L-methionyl-tRNA(Met) + AMP + diphosphate. In terms of biological role, is required not only for elongation of protein synthesis but also for the initiation of all mRNA translation through initiator tRNA(fMet) aminoacylation. The protein is Methionine--tRNA ligase (metG) of Fusobacterium nucleatum subsp. nucleatum (strain ATCC 25586 / DSM 15643 / BCRC 10681 / CIP 101130 / JCM 8532 / KCTC 2640 / LMG 13131 / VPI 4355).